The primary structure comprises 95 residues: UPF0235 protein Pcar_0617 (95 aa).

It belongs to the UPF0235 family.

The protein is UPF0235 protein Pcar_0617 of Syntrophotalea carbinolica (strain DSM 2380 / NBRC 103641 / GraBd1) (Pelobacter carbinolicus).